A 135-amino-acid polypeptide reads, in one-letter code: ATP synthase epsilon chain (135 aa).

Belongs to the ATPase epsilon chain family. F-type ATPases have 2 components, CF(1) - the catalytic core - and CF(0) - the membrane proton channel. CF(1) has five subunits: alpha(3), beta(3), gamma(1), delta(1), epsilon(1). CF(0) has three main subunits: a, b and c.

It localises to the cell inner membrane. In terms of biological role, produces ATP from ADP in the presence of a proton gradient across the membrane. The chain is ATP synthase epsilon chain from Brucella abortus (strain S19).